The chain runs to 353 residues: Beta-agarase B (353 aa).

The signal sequence occupies residues 1–17 (MYLIYLRLVFCCALLLG). C18 carries N-palmitoyl cysteine lipidation. C18 is lipidated: S-diacylglycerol cysteine. Positions 30 to 58 (LPVEQEQEQETEQEGEPEESSEQDLVEEV) are disordered. Positions 32–58 (VEQEQEQETEQEGEPEESSEQDLVEEV) are enriched in acidic residues. Residues 58–353 (VDWKDIPVPA…WIRIYKPVEK (296 aa)) enclose the GH16 domain. Substrate-binding positions include 105–107 (YHN) and D181. E184 (nucleophile) is an active-site residue. Catalysis depends on E189, which acts as the Proton donor. Positions 215, 219, 224, 226, and 308 each coordinate substrate.

It belongs to the glycosyl hydrolase 16 family. Homodimer.

It localises to the cell outer membrane. The catalysed reaction is Hydrolysis of (1-&gt;4)-beta-D-galactosidic linkages in agarose, giving the tetramer as the predominant product.. Functionally, cleaves the beta-1,4-linkages between beta-D-galactose and alpha-L-3,6-anhydro-galactose residues in agarose. Cleaves agarose in a random manner with retention of the anomeric-bond configuration, producing beta-anomers that give rise progressively to alpha-anomers when mutarotation takes place. Also tolerant to hybrid substrates containing C6-sulfate groups at the -4, +1, and +3 positions. The chain is Beta-agarase B (agaB) from Zobellia galactanivorans (strain DSM 12802 / CCUG 47099 / CIP 106680 / NCIMB 13871 / Dsij).